Here is a 476-residue protein sequence, read N- to C-terminus: Adenosylhomocysteinase (476 aa).

Substrate-binding residues include Thr67, Asp142, and Glu202. 203–205 lines the NAD(+) pocket; the sequence is TTT. Substrate is bound by residues Lys232 and Asp236. Residues Asn237, 266 to 271, Glu289, Asn324, 345 to 347, and Asn390 contribute to the NAD(+) site; these read GYGDVG and IGH.

The protein belongs to the adenosylhomocysteinase family. It depends on NAD(+) as a cofactor.

It is found in the cytoplasm. The catalysed reaction is S-adenosyl-L-homocysteine + H2O = L-homocysteine + adenosine. It functions in the pathway amino-acid biosynthesis; L-homocysteine biosynthesis; L-homocysteine from S-adenosyl-L-homocysteine: step 1/1. In terms of biological role, may play a key role in the regulation of the intracellular concentration of adenosylhomocysteine. The chain is Adenosylhomocysteinase from Synechococcus sp. (strain CC9902).